Consider the following 1327-residue polypeptide: ABC transporter 1 (1327 aa).

6 helical membrane-spanning segments follow: residues 47–67, 100–120, 170–190, 195–215, 228–248, and 276–296; these read LGIL…IIFG, VYVG…WNLF, KVGI…IAFV, LGGE…VGGY, VAGA…VHAF, and VAVQ…LAFW. The 280-residue stretch at 47–326 folds into the ABC transmembrane type-1 1 domain; sequence LGILAAIASG…TTYTVIFLLV (280 aa). 3 N-linked (GlcNAc...) asparagine glycosylation sites follow: Asn381, Asn390, and Asn406. One can recognise an ABC transporter 1 domain in the interval 386–663; the sequence is IELNNVSFAF…DGAYAGLVRL (278 aa). Residue 421–428 coordinates ATP; the sequence is GLSGSGKS. 2 N-linked (GlcNAc...) asparagine glycosylation sites follow: Asn463 and Asn674. The next 6 membrane-spanning stretches (helical) occupy residues 743-763, 785-805, 859-881, 888-910, 971-991, and 1005-1025; these read FLAL…AVVF, FYGL…LGSW, LTGS…IALS, IALV…VITM, LWLA…YWWG, and FFIV…MFTL. One can recognise an ABC transmembrane type-1 2 domain in the interval 743–1031; it reads FLALTSAFVV…MFTLAPDVSR (289 aa). A glycan (N-linked (GlcNAc...) asparagine) is linked at Asn1050. A disordered region spans residues 1054–1081; that stretch reads PCQHLKPGNDLEANAEPREKRPDQSQGG. Residues 1084–1323 form the ABC transporter 2 domain; that stretch reads VSLNNVKFSY…SESYKINALH (240 aa). Residue 1119–1126 coordinates ATP; the sequence is GPSGAGKS.

Belongs to the ABC transporter superfamily. ABCB family. Multidrug resistance exporter (TC 3.A.1.201) subfamily.

It localises to the membrane. ABC transporter; part of the gene cluster that mediates the biosynthesis of hydroxamate-containing siderophores that play a critical role in virulence via intracellular iron acquisition during macrophage infection. Probably involved in the excretion of the extracellular siderophores. This is ABC transporter 1 from Ajellomyces capsulatus (Darling's disease fungus).